The primary structure comprises 88 residues: Class II hydrophobin 1 (88 aa).

Residues 1–15 form the signal peptide; it reads MKFFIATIFATGALA. Intrachain disulfides connect Cys19–Cys69, Cys29–Cys59, Cys30–Cys42, and Cys70–Cys81.

The protein belongs to the cerato-ulmin hydrophobin family. As to quaternary structure, homodimer. Homodimers further self-assemble to form highly ordered films at water-air interfaces through intermolecular interactions.

The protein resides in the secreted. Its subcellular location is the cell wall. Its function is as follows. Aerial growth, conidiation, and dispersal of filamentous fungi in the environment rely upon a capability of their secreting small amphipathic proteins called hydrophobins (HPBs) with low sequence identity. Class I can self-assemble into an outermost layer of rodlet bundles on aerial cell surfaces, conferring cellular hydrophobicity that supports fungal growth, development and dispersal; whereas Class II form highly ordered films at water-air interfaces through intermolecular interactions but contribute nothing to the rodlet structure. This is Class II hydrophobin 1 from Trichoderma asperellum (strain ATCC 204424 / CBS 433.97 / NBRC 101777).